The primary structure comprises 384 residues: Glucose-1-phosphate adenylyltransferase (384 aa).

Residues Tyr103, Gly168, 183-184 (EK), and Ser194 contribute to the alpha-D-glucose 1-phosphate site.

Belongs to the bacterial/plant glucose-1-phosphate adenylyltransferase family. As to quaternary structure, homotetramer.

It catalyses the reaction alpha-D-glucose 1-phosphate + ATP + H(+) = ADP-alpha-D-glucose + diphosphate. It participates in glycan biosynthesis; glycogen biosynthesis. Functionally, involved in the biosynthesis of ADP-glucose, a building block required for the elongation reactions to produce glycogen. Catalyzes the reaction between ATP and alpha-D-glucose 1-phosphate (G1P) to produce pyrophosphate and ADP-Glc. The polypeptide is Glucose-1-phosphate adenylyltransferase (Fusobacterium nucleatum subsp. nucleatum (strain ATCC 25586 / DSM 15643 / BCRC 10681 / CIP 101130 / JCM 8532 / KCTC 2640 / LMG 13131 / VPI 4355)).